The chain runs to 50 residues: Mating-type pheromone BAP1(1) (50 aa).

A disordered region spans residues 1–32 (MDGEGHDINIWGARMSPSPAAAPVSATRGAPW). Residues 16 to 26 (SPSPAAAPVSA) are compositionally biased toward low complexity. Cysteine methyl ester is present on Cys47. Cys47 carries the S-farnesyl cysteine lipid modification. Positions 48–50 (VCH) are cleaved as a propeptide — removed in mature form.

It localises to the cell membrane. Its function is as follows. Activates B-regulated development. The sequence is that of Mating-type pheromone BAP1(1) (BAP1(1)) from Schizophyllum commune (Split gill fungus).